The chain runs to 230 residues: MGQQISDQTQLVINKLPEKVAKHVTLVRESGSLTYEEFLGRVAELNDVTAKVASGQEKHLLFEVQPGSDSSAFWKVVVRVVCTKINKSSGIVEASRIMNLYQFIQLYKDITSQAAGVLAQSSTSEEPDENSSSVTSCQASLWMGRVKQLTDEEECCICMDGRADLILPCAHSFCQKCIDKWSDRHRNCPICRLQMTGANESWVVSDAPTEDDMANYILNMADEAGQPHRP.

G2 carries N-myristoyl glycine lipidation. Residues 155–192 form an RING-type zinc finger; sequence CCICMDGRADLILPCAHSFCQKCIDKWSDRHRNCPICR.

The protein localises to the membrane. Its function is as follows. May be involved in spermatogenesis. The polypeptide is RING finger protein 141 (RNF141) (Pongo abelii (Sumatran orangutan)).